Here is a 601-residue protein sequence, read N- to C-terminus: Sodium-dependent phosphate transport protein 2C (601 aa).

At 1–75 the chain is on the cytoplasmic side; sequence MPNSLAGDQV…HQVVSGFLKA (75 aa). Residue Ser4 is modified to Phosphoserine. A helical transmembrane segment spans residues 76–96; sequence CGLLGSLYFFICSLDILSSAF. Over 97–110 the chain is Extracellular; that stretch reads QLLGSKMAGDIFKD. Residues 111–131 form a helical membrane-spanning segment; sequence NVVLSNPVAGLVIGVVVTVLV. The Cytoplasmic segment spans residues 132 to 187; sequence QSSSTSSSIVVSMVASKSLTVQASVPIIMGVNVGTSITSTLVSMAQSGDRDEFQRA. A helical membrane pass occupies residues 188–208; the sequence is FGGSAVHGIFNWLTVLVLLPL. Over 209 to 324 the chain is Extracellular; the sequence is ENATAALERL…FAGSELTDLA (116 aa). N-linked (GlcNAc...) asparagine glycans are attached at residues Asn210, Asn264, Asn267, and Asn299. Residues Cys275 and Cys311 are joined by a disulfide bond. Residues 325-345 traverse the membrane as a helical segment; sequence VGFILLAGSLLVLCVCLVLIV. The Cytoplasmic portion of the chain corresponds to 346-369; it reads KLLNSVLRGRIAQAVKTVINADFP. A helical transmembrane segment spans residues 370-390; it reads FPFGWLSGYLAILVGAGLTFL. Over 391–447 the chain is Extracellular; sequence LQSSSVFTAAIVPLMGVGVINLERAYPLFLGSNIGTTTTALLAALASPADTLLFAVQ. A helical membrane pass occupies residues 448 to 468; it reads VALIHFFFNLAGILLWYLVPV. Residues 469 to 487 lie on the Cytoplasmic side of the membrane; the sequence is LRLPIPLAKRFGDLTAQYR. A helical transmembrane segment spans residues 488–508; it reads WVAIVYLLLTFLLLPLAAFGL. Residues 509–512 are Extracellular-facing; the sequence is SLAG. The chain crosses the membrane as a helical span at residues 513-533; the sequence is GSVLAAVGGPLVGLVLLIILV. Residues 534–601 are Cytoplasmic-facing; it reads NVLQRHRPSW…NPQVIASQQL (68 aa).

This sequence belongs to the SLC34A transporter family. Highly expressed in the kidney. Not found in any of the other tested tissues.

The protein resides in the apical cell membrane. The enzyme catalyses 2 Na(+)(out) + phosphate(out) = 2 Na(+)(in) + phosphate(in). Functionally, involved in actively transporting phosphate into cells via Na(+) cotransport in the renal brush border membrane. The cotransport has a Na(+):Pi stoichiometry of 2:1 and is electroneutral. This chain is Sodium-dependent phosphate transport protein 2C (Slc34a3), found in Rattus norvegicus (Rat).